Here is a 215-residue protein sequence, read N- to C-terminus: HTH-type transcriptional repressor FabR (215 aa).

Positions 10-70 constitute an HTH tetR-type domain; that stretch reads KTRRSLVEAA…TMVDESGLML (61 aa). The H-T-H motif DNA-binding region spans 33 to 52; the sequence is SLREVAREAGIAPTSFYRHF.

Homodimer.

The protein localises to the cytoplasm. Represses the transcription of fabB, involved in unsaturated fatty acid (UFA) biosynthesis. By controlling UFA production, FabR directly influences the physical properties of the membrane bilayer. This chain is HTH-type transcriptional repressor FabR, found in Escherichia coli O139:H28 (strain E24377A / ETEC).